The chain runs to 1476 residues: Cystic fibrosis transmembrane conductance regulator (1476 aa).

The Cytoplasmic segment spans residues 1-77 (MQKSPLEKAS…QLIHALRRCF (77 aa)). Residues 78–98 (FWRFLFYGILLYLGEVTKAVQ) form a helical membrane-spanning segment. An ABC transmembrane type-1 1 domain is found at 81–365 (FLFYGILLYL…TAVQIWYDSF (285 aa)). The Extracellular portion of the chain corresponds to 99-122 (PVLLGRIIASYDPENKVERSIAIY). Residues 123 to 146 (LGIGLCLLFIVRTLLLHPAIFGLH) traverse the membrane as a helical segment. Topologically, residues 147 to 195 (RIGMQMRTAMFSLIYKKTLKLSSRVLDKISIGQLVSLLSNNLNKFDEGL) are cytoplasmic. A helical membrane pass occupies residues 196-216 (ALAHFIWIAPLQVTLLMGLLW). Residues 217 to 222 (DLLQFS) are Extracellular-facing. The chain crosses the membrane as a helical span at residues 223-243 (AFCGLGLLIILVIFQAILGKM). The Cytoplasmic segment spans residues 244–298 (MVKYRDQRAAKINERLVITSEIIDNIYSVKAYCWESAMEKMIENLREVELKMTRK). The chain crosses the membrane as a helical span at residues 299 to 319 (AAYMRFFTSSAFFFSGFFVVF). Topologically, residues 320–339 (LSVLPYTVINGIVLRKIFTT) are extracellular. The helical transmembrane segment at 340 to 358 (ISFCIVLRMSVTRQFPTAV) threads the bilayer. The Cytoplasmic portion of the chain corresponds to 359-853 (QIWYDSFGMI…YLRYFTLHKG (495 aa)). ATP is bound by residues Trp401, 458–465 (GSTGSGKT), and Gln493. An ABC transporter 1 domain is found at 423-646 (SDENNVSFSH…RPDFSSKLMG (224 aa)). The S-palmitoyl cysteine moiety is linked to residue Cys524. Phosphoserine occurs at positions 549 and 660. A disordered R region region spans residues 654-826 (TEERRSSILT…EEINEEDLKE (173 aa)). Residue Ser670 is modified to Phosphoserine; by PKA. A phosphoserine mark is found at Ser684, Ser698, and Ser710. Thr715 carries the phosphothreonine modification. Residues Ser732, Ser763, Ser785, Ser790, and Ser808 each carry the phosphoserine modification. A helical membrane pass occupies residues 854-874 (LLLVLIWCVLVFLVEVAASLF). Residues 854–1153 (LLLVLIWCVL…SSIDTDSLMR (300 aa)) form the ABC transmembrane type-1 2 domain. At 875 to 913 (VLWLLKNNPVNSGNNGTKISNSSYVVIITSTSFYYIFYI) the chain is on the extracellular side. N-linked (GlcNAc...) asparagine glycosylation is found at Asn889 and Asn895. Residues 914-934 (YVGVADTLLALSLFRGLPLVH) traverse the membrane as a discontinuously helical segment. Over 935–985 (TLITASKILHRKMLHSILHAPMSTISKLKAGGILNRFSKDIAILDDFLPLT) the chain is Cytoplasmic. A helical membrane pass occupies residues 986–1006 (IFDFIQLVFIVIGAIIVVSAL). At 1007–1008 (QP) the chain is on the extracellular side. The chain crosses the membrane as a helical span at residues 1009–1029 (YIFLATVPGLVVFILLRAYFL). Over 1030–1090 (HTAQQLKQLE…TANWFMYLAT (61 aa)) the chain is Cytoplasmic. A helical transmembrane segment spans residues 1091–1111 (LRWFQMRIDMIFVLFFIVVTF). Residues 1112-1125 (ISILTTGEGEGTAG) are Extracellular-facing. Residues 1126 to 1146 (IILTLAMNIMSTLQWAVNSSI) traverse the membrane as a helical segment. Residues 1147–1476 (DTDSLMRSVS…TEEEVQETRL (330 aa)) are Cytoplasmic-facing. An ABC transporter 2 domain is found at 1208–1439 (VKDLTVKYMD…KSIFQQAISS (232 aa)). Residues Tyr1215 and 1240–1247 (GRTGSGKS) each bind ATP. The interval 1382 to 1476 (RVLKQAFAGC…TEEEVQETRL (95 aa)) is interaction with GORASP2. Cys1391 carries the S-palmitoyl cysteine lipid modification. Residues Ser1440 and Ser1452 each carry the phosphoserine modification. Residues 1446–1476 (FQGRHSSKHKPRTQITALKEETEEEVQETRL) are disordered. A compositionally biased stretch (acidic residues) spans 1466–1476 (ETEEEVQETRL). The PDZ-binding motif lies at 1474 to 1476 (TRL).

This sequence belongs to the ABC transporter superfamily. ABCC family. CFTR transporter (TC 3.A.1.202) subfamily. Monomer; does not require oligomerization for channel activity. May form oligomers in the membrane. Interacts with SLC26A3, SLC26A6 and NHERF1. Interacts with SHANK2. Interacts with MYO6. Interacts (via C-terminus) with GOPC (via PDZ domain); this promotes CFTR internalization and thereby decreases channel activity. Interacts with SLC4A7 through NHERF1. Found in a complex with MYO5B and RAB11A. Interacts with ANO1. Interacts with SLC26A8. Interacts with AHCYL1; the interaction increases CFTR activity. Interacts with CSE1L. The core-glycosylated form interacts with GORASP2 (via PDZ GRASP-type 1 domain) in respone to ER stress. Interacts with MARCHF2; the interaction leads to CFTR ubiqtuitination and degradation. Interacts with ADGRG2. In terms of processing, N-glycosylated. Post-translationally, phosphorylated; cAMP treatment promotes phosphorylation and activates the channel. Dephosphorylation decreases the ATPase activity (in vitro). Phosphorylation at PKA sites activates the channel. Phosphorylation at PKC sites enhances the response to phosphorylation by PKA. Phosphorylated by AMPK; this inhibits channel activity. Ubiquitinated, leading to its degradation in the lysosome. Deubiquitination by USP10 in early endosomes enhances its endocytic recycling to the cell membrane. Ubiquitinated by RNF185 during ER stress. Ubiquitinated by MARCHF2. In terms of tissue distribution, expressed in the epididymis (at protein level). In the initial segment of the epididymis, detected on both the luminal and basolateral sides of the ducts where it is expressed in the duct columnar cells as well as in the interstitial smooth muscle cells. Expressed in sperm in the caput. In the cauda, detected along the luminal border but not continuously and is also expressed on the basolateral surface. Within the caudal lumen, detected on sperm. Isoform 1: Expressed in a variety of epithelial tissues including colon, kidney, lung, small intestine, pancreatic duct and testis. Isoform 2: Expressed only in testis. Isoform 3: Expressed only in testis.

The protein resides in the apical cell membrane. It is found in the early endosome membrane. The protein localises to the cell membrane. Its subcellular location is the recycling endosome membrane. It localises to the endoplasmic reticulum membrane. The protein resides in the nucleus. The catalysed reaction is ATP + H2O + closed Cl(-) channel = ADP + phosphate + open Cl(-) channel.. The enzyme catalyses chloride(in) = chloride(out). It catalyses the reaction hydrogencarbonate(in) = hydrogencarbonate(out). It carries out the reaction ATP + H2O = ADP + phosphate + H(+). In terms of biological role, epithelial ion channel that plays an important role in the regulation of epithelial ion and water transport and fluid homeostasis. Mediates the transport of chloride ions across the cell membrane. Possesses an intrinsic ATPase activity and utilizes ATP to gate its channel; the passive flow of anions through the channel is gated by cycles of ATP binding and hydrolysis by the ATP-binding domains. The ion channel is also permeable to HCO(3)(-); selectivity depends on the extracellular chloride concentration. Exerts its function also by modulating the activity of other ion channels and transporters. Contributes to the regulation of the pH and the ion content of the epithelial fluid layer. Modulates the activity of the epithelial sodium channel (ENaC) complex, in part by regulating the cell surface expression of the ENaC complex. May regulate bicarbonate secretion and salvage in epithelial cells by regulating the transporter SLC4A7. Can inhibit the chloride channel activity of ANO1. Plays a role in the chloride and bicarbonate homeostasis during sperm epididymal maturation and capacitation. The chain is Cystic fibrosis transmembrane conductance regulator from Mus musculus (Mouse).